Consider the following 112-residue polypeptide: Large ribosomal subunit protein eL31 (112 aa).

This sequence belongs to the eukaryotic ribosomal protein eL31 family. As to quaternary structure, component of the large ribosomal subunit. Mature ribosomes consist of a small (40S) and a large (60S) subunit. The 40S subunit contains about 32 different proteins and 1 molecule of RNA (18S). The 60S subunit contains 45 different proteins and 3 molecules of RNA (25S, 5.8S and 5S).

The protein localises to the cytoplasm. Functionally, component of the ribosome, a large ribonucleoprotein complex responsible for the synthesis of proteins in the cell. The small ribosomal subunit (SSU) binds messenger RNAs (mRNAs) and translates the encoded message by selecting cognate aminoacyl-transfer RNA (tRNA) molecules. The large subunit (LSU) contains the ribosomal catalytic site termed the peptidyl transferase center (PTC), which catalyzes the formation of peptide bonds, thereby polymerizing the amino acids delivered by tRNAs into a polypeptide chain. The nascent polypeptides leave the ribosome through a tunnel in the LSU and interact with protein factors that function in enzymatic processing, targeting, and the membrane insertion of nascent chains at the exit of the ribosomal tunnel. This is Large ribosomal subunit protein eL31 from Candida albicans (strain SC5314 / ATCC MYA-2876) (Yeast).